Here is a 303-residue protein sequence, read N- to C-terminus: Bifunctional protein FolD 2 (303 aa).

NADP(+)-binding positions include 169–171, serine 194, and isoleucine 235; that span reads GRS.

This sequence belongs to the tetrahydrofolate dehydrogenase/cyclohydrolase family. Homodimer.

It catalyses the reaction (6R)-5,10-methylene-5,6,7,8-tetrahydrofolate + NADP(+) = (6R)-5,10-methenyltetrahydrofolate + NADPH. The enzyme catalyses (6R)-5,10-methenyltetrahydrofolate + H2O = (6R)-10-formyltetrahydrofolate + H(+). It participates in one-carbon metabolism; tetrahydrofolate interconversion. Its function is as follows. Catalyzes the oxidation of 5,10-methylenetetrahydrofolate to 5,10-methenyltetrahydrofolate and then the hydrolysis of 5,10-methenyltetrahydrofolate to 10-formyltetrahydrofolate. This is Bifunctional protein FolD 2 from Ectopseudomonas mendocina (strain ymp) (Pseudomonas mendocina).